The following is a 408-amino-acid chain: Serine/threonine transporter SstT (408 aa).

9 helical membrane-spanning segments follow: residues 11-31 (LANG…VSLA), 43-63 (FLGS…VFIL), 82-102 (IVVL…VLSM), 141-161 (ALMT…GLAL), 192-212 (IGIF…AIAG), 216-236 (LLAV…PLIV), 290-310 (IPLG…VLTL), 316-336 (LGIQ…AISA), and 363-383 (VAMQ…AAET).

This sequence belongs to the dicarboxylate/amino acid:cation symporter (DAACS) (TC 2.A.23) family.

Its subcellular location is the cell inner membrane. It carries out the reaction L-serine(in) + Na(+)(in) = L-serine(out) + Na(+)(out). It catalyses the reaction L-threonine(in) + Na(+)(in) = L-threonine(out) + Na(+)(out). Its function is as follows. Involved in the import of serine and threonine into the cell, with the concomitant import of sodium (symport system). This chain is Serine/threonine transporter SstT, found in Shewanella sp. (strain ANA-3).